We begin with the raw amino-acid sequence, 324 residues long: Glyoxylate/hydroxypyruvate reductase B (324 aa).

Residues arginine 237 and glutamate 266 contribute to the active site. The active-site Proton donor is the histidine 285.

It belongs to the D-isomer specific 2-hydroxyacid dehydrogenase family. GhrB subfamily. As to quaternary structure, homodimer.

It is found in the cytoplasm. It catalyses the reaction glycolate + NADP(+) = glyoxylate + NADPH + H(+). It carries out the reaction (R)-glycerate + NAD(+) = 3-hydroxypyruvate + NADH + H(+). The catalysed reaction is (R)-glycerate + NADP(+) = 3-hydroxypyruvate + NADPH + H(+). Catalyzes the NADPH-dependent reduction of glyoxylate and hydroxypyruvate into glycolate and glycerate, respectively. This is Glyoxylate/hydroxypyruvate reductase B from Escherichia coli O6:H1 (strain CFT073 / ATCC 700928 / UPEC).